The following is a 201-amino-acid chain: Probable thymidylate kinase (201 aa).

10–17 contributes to the ATP binding site; the sequence is GIDGSGKS.

The protein belongs to the thymidylate kinase family.

It carries out the reaction dTMP + ATP = dTDP + ADP. The sequence is that of Probable thymidylate kinase from Methanococcoides burtonii (strain DSM 6242 / NBRC 107633 / OCM 468 / ACE-M).